The sequence spans 148 residues: Large ribosomal subunit protein bL9 (148 aa).

The protein belongs to the bacterial ribosomal protein bL9 family.

Its function is as follows. Binds to the 23S rRNA. This chain is Large ribosomal subunit protein bL9, found in Pseudomonas fluorescens (strain ATCC BAA-477 / NRRL B-23932 / Pf-5).